Here is a 238-residue protein sequence, read N- to C-terminus: Uridylate kinase (238 aa).

12-15 (KLSG) serves as a coordination point for ATP. Gly-54 is a binding site for UMP. The ATP site is built by Gly-55 and Arg-59. Residues Asp-74 and 135–142 (TGNPYFTT) contribute to the UMP site. The ATP site is built by Thr-162, Tyr-168, and Asp-171.

Belongs to the UMP kinase family. In terms of assembly, homohexamer.

The protein resides in the cytoplasm. It carries out the reaction UMP + ATP = UDP + ADP. It functions in the pathway pyrimidine metabolism; CTP biosynthesis via de novo pathway; UDP from UMP (UMPK route): step 1/1. With respect to regulation, inhibited by UTP. Functionally, catalyzes the reversible phosphorylation of UMP to UDP. This is Uridylate kinase from Lawsonia intracellularis (strain PHE/MN1-00).